The following is a 452-amino-acid chain: Putative zinc metalloprotease VC_2253 (452 aa).

H22 contributes to the Zn(2+) binding site. The active site involves E23. H26 is a binding site for Zn(2+). The chain crosses the membrane as a helical span at residues 98–120; it reads SAIVSAGPIFNFLFAIFAYWLVF. In terms of domain architecture, PDZ spans 197–292; that stretch reads NLRDWNFDPE…QVELTLIPDS (96 aa). 2 helical membrane-spanning segments follow: residues 378 to 400 and 428 to 447; these read FVYFLGFLALISINLGIINLVPL and MGYRIGGAIIFSLMAVAIFN.

This sequence belongs to the peptidase M50B family. Zn(2+) is required as a cofactor.

It is found in the cell inner membrane. The protein is Putative zinc metalloprotease VC_2253 of Vibrio cholerae serotype O1 (strain ATCC 39315 / El Tor Inaba N16961).